The primary structure comprises 884 residues: Translation initiation factor IF-2 (884 aa).

The disordered stretch occupies residues 58-248 (PEKVEQKRVR…GKTESVETEE (191 aa)). Residues 66–77 (VRSNVIRKRRQP) are compositionally biased toward basic residues. The segment covering 87–106 (EAPAAQAPEAEEVTAPTAEE) has biased composition (low complexity). A compositionally biased stretch (basic residues) spans 172-183 (SRKKAKAKKHQA). Over residues 207–223 (DTAPADSPAAPAAATPA) the composition is skewed to low complexity. The span at 229–239 (KPSRKDRKKRG) shows a compositional bias: basic residues. Positions 384–553 (KRAPVVTIMG…LLQAEMLELK (170 aa)) constitute a tr-type G domain. A G1 region spans residues 393–400 (GHVDHGKT). A GTP-binding site is contributed by 393 to 400 (GHVDHGKT). The tract at residues 418–422 (GITQH) is G2. A G3 region spans residues 439-442 (DTPG). Residues 439 to 443 (DTPGH) and 493 to 496 (NKID) contribute to the GTP site. Residues 493 to 496 (NKID) form a G4 region. The G5 stretch occupies residues 529–531 (SAK).

The protein belongs to the TRAFAC class translation factor GTPase superfamily. Classic translation factor GTPase family. IF-2 subfamily.

Its subcellular location is the cytoplasm. In terms of biological role, one of the essential components for the initiation of protein synthesis. Protects formylmethionyl-tRNA from spontaneous hydrolysis and promotes its binding to the 30S ribosomal subunits. Also involved in the hydrolysis of GTP during the formation of the 70S ribosomal complex. This chain is Translation initiation factor IF-2, found in Desulfosudis oleivorans (strain DSM 6200 / JCM 39069 / Hxd3) (Desulfococcus oleovorans).